The chain runs to 1337 residues: Sister chromatid cohesion protein PDS5 homolog A (1337 aa).

Met-1 is modified (N-acetylmethionine). The stretch at 393–429 is one HEAT repeat; the sequence is ALVNDQLLGFVRERTLDKRWRVRKEAMMGLAQLYKKY. A Phosphoserine modification is found at Ser-1097. Lys-1146 carries the N6-acetyllysine modification. The interval 1150 to 1337 is disordered; that stretch reads ATGRKPYVRS…PAERQIDLQR (188 aa). The segment covering 1159–1180 has biased composition (polar residues); the sequence is STGTETGSNINVNSELNPSTGN. Ser-1195 is modified (phosphoserine). Position 1208 is a phosphothreonine (Thr-1208). An N6-acetyllysine modification is found at Lys-1211. A compositionally biased stretch (polar residues) spans 1223-1233; that stretch reads SDQATQGNISS. Lys-1290 carries the N6-acetyllysine modification. Ser-1305 carries the post-translational modification Phosphoserine. The span at 1321–1337 shows a compositional bias: basic and acidic residues; sequence DLAKKAAPAERQIDLQR.

It belongs to the PDS5 family. Interacts with the cohesin complex. Interacts with WAPL (via FGF motifs) or CDCA5 (via the FGF motif); the interaction is direct, cohesin-dependent and competitive. Interacts with SMC3. Interacts with TP63. In terms of tissue distribution, highest level in colon. Low levels in lung, ovary, breast and kidney. Reduced level in renal tumor tissue. Isoform 2 is expressed in kidney.

It localises to the nucleus. Its function is as follows. Probable regulator of sister chromatid cohesion in mitosis which may stabilize cohesin complex association with chromatin. May couple sister chromatid cohesion during mitosis to DNA replication. Cohesion ensures that chromosome partitioning is accurate in both meiotic and mitotic cells and plays an important role in DNA repair. The sequence is that of Sister chromatid cohesion protein PDS5 homolog A from Homo sapiens (Human).